Reading from the N-terminus, the 1331-residue chain is Disease resistance protein RUN1 (1331 aa).

A disordered region spans residues 1–20; sequence MASTSSSRASSSSSSSSTPS. Residues 25-190 enclose the TIR domain; it reads ITYDVFLSFR…EITDSIFRRL (166 aa). Residues 34–39 and G66 contribute to the NAD(+) site; that span reads RGEDTR. E100 is an active-site residue. In terms of domain architecture, NB-ARC spans 206 to 434; it reads SHVKEMIWRL…REPEAEILSV (229 aa). 20 LRR repeats span residues 429–452, 480–509, 540–565, 616–638, 648–673, 684–708, 709–732, 734–756, 757–779, 781–803, 804–826, 828–850, 851–873, 875–897, 898–920, 922–944, 945–967, 969–991, 992–1014, and 1017–1040; these read AEILSVLKRSYDGLGRTEKSIFLD, IKNLNDKCLITLQYNRIRMHDLIQQMGWEI, IKRVETISLDLSKLKRVCSNSNAFAK, SYELRYLRWDGYPLDFLPSNFDG, CSNIKQLRLGNKDLEMLKVIDLSYSR, MPNLERLFLRGCVSLIDIHPSVGNM, KKLTTLSLKSCKKLKNLPDSIGDL, SLEILDLAYCSKFEKFPEKGGNM, KSLTELDLQNTAIKDLPDSIGDL, SLKYLDLSDCSKFEKFPEKGGNM, KSLRELDLRNTAIKDLPDSIRDL, SLERLYLSYCSKFEKFPEKGGNM, KSLMELDLQNTAIKDLPDSIGDL, SLKYLDLSNCSKFEKFPEKGGNM, KSLTELFLENTAIKDLPDSIGDL, SLVSLNLSDCSKFEKFPEKGGNM, KSLNWLYLNNTAIKDLPDSIGDL, SLMRLYLSNSSKFEKLPEKVGNM, KSLELLDLRNTAIKDLPDSIGDL, and LEKLSLSNCPKFEVLPLSLKAIDA. The Nuclear localization signal signature appears at 1287–1291; that stretch reads RKRRR.

This sequence belongs to the disease resistance TIR-NB-LRR family.

It localises to the nucleus. The protein localises to the cytoplasm. It catalyses the reaction NAD(+) + H2O = ADP-D-ribose + nicotinamide + H(+). It carries out the reaction NADP(+) + H2O = ADP-D-ribose 2'-phosphate + nicotinamide + H(+). Functionally, disease resistance (R) protein that confers resistance to multiple powdery and downy mildew by promoting cell death. Acts as a NAD(+) hydrolase (NADase): in response to activation, catalyzes cleavage of NAD(+) into ADP-D-ribose (ADPR) and nicotinamide; NAD(+) cleavage triggering a defense system that promotes cell death. Also able to hydrolyze NADP(+), but not other NAD(+)-related molecules. The sequence is that of Disease resistance protein RUN1 from Vitis rotundifolia (Muscadine grape).